Here is a 345-residue protein sequence, read N- to C-terminus: S-adenosylmethionine:tRNA ribosyltransferase-isomerase (345 aa).

This sequence belongs to the QueA family. As to quaternary structure, monomer.

The protein localises to the cytoplasm. It carries out the reaction 7-aminomethyl-7-carbaguanosine(34) in tRNA + S-adenosyl-L-methionine = epoxyqueuosine(34) in tRNA + adenine + L-methionine + 2 H(+). It participates in tRNA modification; tRNA-queuosine biosynthesis. Functionally, transfers and isomerizes the ribose moiety from AdoMet to the 7-aminomethyl group of 7-deazaguanine (preQ1-tRNA) to give epoxyqueuosine (oQ-tRNA). This Anaeromyxobacter sp. (strain K) protein is S-adenosylmethionine:tRNA ribosyltransferase-isomerase.